The following is a 390-amino-acid chain: 23S rRNA (uracil(747)-C(5))-methyltransferase RlmC (390 aa).

Cys12, Cys20, Cys23, and Cys100 together coordinate [4Fe-4S] cluster. 4 residues coordinate S-adenosyl-L-methionine: Gln225, Phe254, Glu275, and Asn322. Cys349 serves as the catalytic Nucleophile.

This sequence belongs to the class I-like SAM-binding methyltransferase superfamily. RNA M5U methyltransferase family. RlmC subfamily.

It catalyses the reaction uridine(747) in 23S rRNA + S-adenosyl-L-methionine = 5-methyluridine(747) in 23S rRNA + S-adenosyl-L-homocysteine + H(+). Its function is as follows. Catalyzes the formation of 5-methyl-uridine at position 747 (m5U747) in 23S rRNA. In Shewanella baltica (strain OS223), this protein is 23S rRNA (uracil(747)-C(5))-methyltransferase RlmC.